The primary structure comprises 271 residues: Cobalt import ATP-binding protein CbiO (271 aa).

An ABC transporter domain is found at 2–236 (LATSDLWFRY…TEAMEHAGLT (235 aa)). 34–41 (GANGCGKS) serves as a coordination point for ATP.

This sequence belongs to the ABC transporter superfamily. Cobalt importer (TC 3.A.1.18.1) family. Forms an energy-coupling factor (ECF) transporter complex composed of an ATP-binding protein (A component, CbiO), a transmembrane protein (T component, CbiQ) and 2 possible substrate-capture proteins (S components, CbiM and CbiN) of unknown stoichimetry. Expression of just CbiMN in E.coli confers some cobalt uptake.

It is found in the cell inner membrane. The protein operates within cofactor biosynthesis; adenosylcobalamin biosynthesis. In terms of biological role, part of the energy-coupling factor (ECF) transporter complex CbiMNOQ involved in cobalt import. The complex confers cobalt uptake upon expression in E.coli; can also transport nickel with a very low affinity. Presumably responsible for energy coupling to the transport system. The polypeptide is Cobalt import ATP-binding protein CbiO (Salmonella typhimurium (strain LT2 / SGSC1412 / ATCC 700720)).